A 1049-amino-acid chain; its full sequence is Isoleucine--tRNA ligase (1049 aa).

The 'HIGH' region signature appears at 48–58 (PYTTGRIHLGT). The 'KMSKS' region motif lies at 596-600 (KMSKS). K599 lines the ATP pocket.

It belongs to the class-I aminoacyl-tRNA synthetase family. IleS type 2 subfamily. As to quaternary structure, monomer. The cofactor is Zn(2+).

It is found in the cytoplasm. It catalyses the reaction tRNA(Ile) + L-isoleucine + ATP = L-isoleucyl-tRNA(Ile) + AMP + diphosphate. Catalyzes the attachment of isoleucine to tRNA(Ile). As IleRS can inadvertently accommodate and process structurally similar amino acids such as valine, to avoid such errors it has two additional distinct tRNA(Ile)-dependent editing activities. One activity is designated as 'pretransfer' editing and involves the hydrolysis of activated Val-AMP. The other activity is designated 'posttransfer' editing and involves deacylation of mischarged Val-tRNA(Ile). This Methanothrix thermoacetophila (strain DSM 6194 / JCM 14653 / NBRC 101360 / PT) (Methanosaeta thermophila) protein is Isoleucine--tRNA ligase.